The chain runs to 378 residues: UPF0754 membrane protein BT9727_0767 (378 aa).

A run of 2 helical transmembrane segments spans residues 1-21 (MNIW…GGFT) and 357-377 (YLGA…LLFL).

The protein belongs to the UPF0754 family.

The protein localises to the cell membrane. This is UPF0754 membrane protein BT9727_0767 from Bacillus thuringiensis subsp. konkukian (strain 97-27).